Here is a 721-residue protein sequence, read N- to C-terminus: Polyphosphate kinase (721 aa).

Asparagine 54 serves as a coordination point for ATP. Mg(2+)-binding residues include arginine 379 and arginine 409. A PLD phosphodiesterase domain is found at 434 to 468; it reads THLKTHSKIALVVKRIGGELTSFVHLGTGNYNDKT. Residue histidine 439 is the Phosphohistidine intermediate of the active site. The ATP site is built by tyrosine 472, arginine 568, and histidine 596.

The protein belongs to the polyphosphate kinase 1 (PPK1) family. It depends on Mg(2+) as a cofactor. An intermediate of this reaction is the autophosphorylated ppk in which a phosphate is covalently linked to a histidine residue through a N-P bond.

The enzyme catalyses [phosphate](n) + ATP = [phosphate](n+1) + ADP. Functionally, catalyzes the reversible transfer of the terminal phosphate of ATP to form a long-chain polyphosphate (polyP). The polypeptide is Polyphosphate kinase (Staphylococcus haemolyticus (strain JCSC1435)).